The following is a 416-amino-acid chain: uncharacterized protein (416 aa).

Zn(2+) is bound by residues H29, D31, E144, H215, and H236.

This sequence belongs to the metallo-dependent hydrolases superfamily. Peptidase M19 family. The cofactor is Zn(2+).

It carries out the reaction an L-aminoacyl-L-amino acid + H2O = 2 an L-alpha-amino acid. This is an uncharacterized protein from Schizosaccharomyces pombe (strain 972 / ATCC 24843) (Fission yeast).